Reading from the N-terminus, the 287-residue chain is MSEIGLVKIYSGKVRDLYEIDDKRMLMVASDRLSAFDVILDDPIPSKGEILTQISNFWFKKLAHIMPNHFTGQTVYDVLPENEAKVLEKRAVVAKKLTPVKVEAIVRGYLAGSGWKDYQKTGSVCGIRLPEGMQEAQQLPEVIFTPSTKAAVGDHDENISFEECGRIIGKELAEEVRAKAVRLYTEAAEYAKSRGIIICDTKFEFGLDTNGTLTLMDEVLTPDSSRFWPADQYEVGTNPPSFDKQFVRDWLEQSGWNKKAPAPKVPADVIQKTVEKYREALTLLTQD.

Belongs to the SAICAR synthetase family.

The enzyme catalyses 5-amino-1-(5-phospho-D-ribosyl)imidazole-4-carboxylate + L-aspartate + ATP = (2S)-2-[5-amino-1-(5-phospho-beta-D-ribosyl)imidazole-4-carboxamido]succinate + ADP + phosphate + 2 H(+). Its pathway is purine metabolism; IMP biosynthesis via de novo pathway; 5-amino-1-(5-phospho-D-ribosyl)imidazole-4-carboxamide from 5-amino-1-(5-phospho-D-ribosyl)imidazole-4-carboxylate: step 1/2. This chain is Phosphoribosylaminoimidazole-succinocarboxamide synthase, found in Neisseria meningitidis serogroup A / serotype 4A (strain DSM 15465 / Z2491).